A 384-amino-acid polypeptide reads, in one-letter code: Putative 8-amino-7-oxononanoate synthase (384 aa).

Residue Arg19 coordinates substrate. 106–107 (GY) provides a ligand contact to pyridoxal 5'-phosphate. His131 is a substrate binding site. Residues Ser177, 202 to 205 (DDAH), and 233 to 236 (TLSK) contribute to the pyridoxal 5'-phosphate site. An N6-(pyridoxal phosphate)lysine modification is found at Lys236.

This sequence belongs to the class-II pyridoxal-phosphate-dependent aminotransferase family. BioF subfamily. Homodimer. Pyridoxal 5'-phosphate serves as cofactor.

It carries out the reaction 6-carboxyhexanoyl-[ACP] + L-alanine + H(+) = (8S)-8-amino-7-oxononanoate + holo-[ACP] + CO2. It participates in cofactor biosynthesis; biotin biosynthesis. Catalyzes the decarboxylative condensation of pimeloyl-[acyl-carrier protein] and L-alanine to produce 8-amino-7-oxononanoate (AON), [acyl-carrier protein], and carbon dioxide. In Desulforudis audaxviator (strain MP104C), this protein is Putative 8-amino-7-oxononanoate synthase (bioF).